The following is a 483-amino-acid chain: Altronate oxidoreductase (483 aa).

Residue 18–29 (IIQFGEGNFLRA) coordinates NAD(+).

The protein belongs to the mannitol dehydrogenase family. UxaB subfamily.

The enzyme catalyses D-altronate + NAD(+) = keto-D-tagaturonate + NADH + H(+). It functions in the pathway carbohydrate metabolism; pentose and glucuronate interconversion. The protein is Altronate oxidoreductase of Cronobacter sakazakii (strain ATCC BAA-894) (Enterobacter sakazakii).